The primary structure comprises 408 residues: Protein CNPPD1 (408 aa).

A helical transmembrane segment spans residues Cys233–Ile253.

This sequence belongs to the CNPPD1 family.

The protein localises to the membrane. The protein is Protein CNPPD1 (Cnppd1) of Rattus norvegicus (Rat).